The chain runs to 366 residues: tRNA/tmRNA (uracil-C(5))-methyltransferase (366 aa).

S-adenosyl-L-methionine-binding residues include Gln-189, Tyr-217, Asn-222, Glu-238, and Asp-298. The active-site Nucleophile is Cys-323. Glu-357 functions as the Proton acceptor in the catalytic mechanism.

This sequence belongs to the class I-like SAM-binding methyltransferase superfamily. RNA M5U methyltransferase family. TrmA subfamily.

It catalyses the reaction uridine(54) in tRNA + S-adenosyl-L-methionine = 5-methyluridine(54) in tRNA + S-adenosyl-L-homocysteine + H(+). The enzyme catalyses uridine(341) in tmRNA + S-adenosyl-L-methionine = 5-methyluridine(341) in tmRNA + S-adenosyl-L-homocysteine + H(+). Its function is as follows. Dual-specificity methyltransferase that catalyzes the formation of 5-methyluridine at position 54 (m5U54) in all tRNAs, and that of position 341 (m5U341) in tmRNA (transfer-mRNA). This is tRNA/tmRNA (uracil-C(5))-methyltransferase from Photorhabdus laumondii subsp. laumondii (strain DSM 15139 / CIP 105565 / TT01) (Photorhabdus luminescens subsp. laumondii).